The following is a 238-amino-acid chain: Large ribosomal subunit protein uL1 (238 aa).

Belongs to the universal ribosomal protein uL1 family. As to quaternary structure, part of the 50S ribosomal subunit.

Binds directly to 23S rRNA. The L1 stalk is quite mobile in the ribosome, and is involved in E site tRNA release. Functionally, protein L1 is also a translational repressor protein, it controls the translation of the L11 operon by binding to its mRNA. In Frankia casuarinae (strain DSM 45818 / CECT 9043 / HFP020203 / CcI3), this protein is Large ribosomal subunit protein uL1.